A 67-amino-acid polypeptide reads, in one-letter code: Large ribosomal subunit protein uL29 (67 aa).

This sequence belongs to the universal ribosomal protein uL29 family.

This chain is Large ribosomal subunit protein uL29, found in Rubrobacter xylanophilus (strain DSM 9941 / JCM 11954 / NBRC 16129 / PRD-1).